The chain runs to 167 residues: Large ribosomal subunit protein uL10 (167 aa).

This sequence belongs to the universal ribosomal protein uL10 family. Part of the ribosomal stalk of the 50S ribosomal subunit. The N-terminus interacts with L11 and the large rRNA to form the base of the stalk. The C-terminus forms an elongated spine to which L12 dimers bind in a sequential fashion forming a multimeric L10(L12)X complex.

Forms part of the ribosomal stalk, playing a central role in the interaction of the ribosome with GTP-bound translation factors. The chain is Large ribosomal subunit protein uL10 from Psychromonas ingrahamii (strain DSM 17664 / CCUG 51855 / 37).